The chain runs to 148 residues: PTS system fructose-like EIIA component (148 aa).

Residues 2–145 form the PTS EIIA type-2 domain; sequence AALTASCIDL…DQVLALLNQT (144 aa). The active-site Tele-phosphohistidine intermediate is His-64. The residue at position 64 (His-64) is a Phosphohistidine; by HPr.

Its subcellular location is the cytoplasm. The phosphoenolpyruvate-dependent sugar phosphotransferase system (sugar PTS), a major carbohydrate active transport system, catalyzes the phosphorylation of incoming sugar substrates concomitantly with their translocation across the cell membrane. The enzyme II FrvAB PTS system is involved in fructose transport. The protein is PTS system fructose-like EIIA component of Escherichia coli (strain K12).